Reading from the N-terminus, the 101-residue chain is Ubiquitin-related modifier 1 (101 aa).

At glycine 101 the chain carries 1-thioglycine. Glycine 101 is covalently cross-linked (Glycyl lysine isopeptide (Gly-Lys) (interchain with K-? in acceptor proteins)).

The protein belongs to the URM1 family. C-terminal thiocarboxylation occurs in 2 steps, it is first acyl-adenylated (-COAMP) via the hesA/moeB/thiF part of UBA4, then thiocarboxylated (-COSH) via the rhodanese domain of UBA4.

The protein localises to the cytoplasm. The protein operates within tRNA modification; 5-methoxycarbonylmethyl-2-thiouridine-tRNA biosynthesis. Its function is as follows. Acts as a sulfur carrier required for 2-thiolation of mcm(5)S(2)U at tRNA wobble positions of cytosolic tRNA(Lys), tRNA(Glu) and tRNA(Gln). Serves as sulfur donor in tRNA 2-thiolation reaction by being thiocarboxylated (-COSH) at its C-terminus by the MOCS3 homolog UBA4. The sulfur is then transferred to tRNA to form 2-thiolation of mcm(5)S(2)U. Prior mcm(5) tRNA modification by the elongator complex is required for 2-thiolation. Also acts as a ubiquitin-like protein (UBL) that is covalently conjugated via an isopeptide bond to lysine residues of target proteins such as AHP1. The thiocarboxylated form serves as substrate for conjugation and oxidative stress specifically induces the formation of UBL-protein conjugates. The protein is Ubiquitin-related modifier 1 of Kluyveromyces lactis (strain ATCC 8585 / CBS 2359 / DSM 70799 / NBRC 1267 / NRRL Y-1140 / WM37) (Yeast).